A 365-amino-acid polypeptide reads, in one-letter code: DNA polymerase IV 1 (365 aa).

One can recognise a UmuC domain in the interval 6–196 (VLHIDMDYFF…LNVSKLWGIG (191 aa)). Residues Asp10 and Asp113 each coordinate Mg(2+). The active site involves Glu114.

It belongs to the DNA polymerase type-Y family. In terms of assembly, monomer. Mg(2+) is required as a cofactor.

It localises to the cytoplasm. It carries out the reaction DNA(n) + a 2'-deoxyribonucleoside 5'-triphosphate = DNA(n+1) + diphosphate. In terms of biological role, poorly processive, error-prone DNA polymerase involved in untargeted mutagenesis. Copies undamaged DNA at stalled replication forks, which arise in vivo from mismatched or misaligned primer ends. These misaligned primers can be extended by PolIV. Exhibits no 3'-5' exonuclease (proofreading) activity. May be involved in translesional synthesis. The chain is DNA polymerase IV 1 (dbh1) from Methanosarcina mazei (strain ATCC BAA-159 / DSM 3647 / Goe1 / Go1 / JCM 11833 / OCM 88) (Methanosarcina frisia).